The primary structure comprises 896 residues: Protein translocase subunit SecA (896 aa).

ATP-binding positions include Q87, 105–109, and D507; that span reads GEGKT. Positions 853–879 are disordered; that stretch reads ESLSENDEASETQTFRRQEKKIGRNDP. The span at 866–876 shows a compositional bias: basic and acidic residues; that stretch reads TFRRQEKKIGR. Zn(2+) contacts are provided by C880, C882, C891, and H892.

It belongs to the SecA family. In terms of assembly, monomer and homodimer. Part of the essential Sec protein translocation apparatus which comprises SecA, SecYEG and auxiliary proteins SecDF-YajC and YidC. The cofactor is Zn(2+).

It is found in the cell inner membrane. The protein resides in the cytoplasm. The enzyme catalyses ATP + H2O + cellular proteinSide 1 = ADP + phosphate + cellular proteinSide 2.. Part of the Sec protein translocase complex. Interacts with the SecYEG preprotein conducting channel. Has a central role in coupling the hydrolysis of ATP to the transfer of proteins into and across the cell membrane, serving both as a receptor for the preprotein-SecB complex and as an ATP-driven molecular motor driving the stepwise translocation of polypeptide chains across the membrane. The polypeptide is Protein translocase subunit SecA (Legionella pneumophila (strain Corby)).